The sequence spans 345 residues: Tyrosine-binding protein (345 aa).

A signal peptide spans 1-23 (MIKSKKILSLIIAGVLGVSMLTG). A lipid anchor (N-palmitoyl cysteine) is attached at C24. C24 carries S-diacylglycerol cysteine lipidation.

As to quaternary structure, the complex is probably composed of two ATP-binding proteins (CDR20291_0806), two transmembrane proteins (CDR20291_0807) and a solute-binding protein (CDR20291_0805).

Its subcellular location is the cell membrane. Functionally, probably part of an ABC transporter complex involved in tyrosine uptake. May also import phenylalanine. The chain is Tyrosine-binding protein from Clostridioides difficile (strain R20291) (Peptoclostridium difficile).